Here is a 330-residue protein sequence, read N- to C-terminus: Ketol-acid reductoisomerase (NADP(+)) (330 aa).

Residues 1–181 (MNAYYEQDAD…GGTKAGVIET (181 aa)) form the KARI N-terminal Rossmann domain. NADP(+) contacts are provided by residues 24–27 (FGSQ), Arg-47, Ser-50, Ser-52, and 82–85 (DQYQ). His-107 is a catalytic residue. Gly-133 contributes to the NADP(+) binding site. Residues 182-327 (TFKNETETDL…AKLRDMMSWL (146 aa)) enclose the KARI C-terminal knotted domain. Residues Asp-190, Glu-194, Glu-226, and Glu-230 each contribute to the Mg(2+) site. Ser-251 is a binding site for substrate.

Belongs to the ketol-acid reductoisomerase family. It depends on Mg(2+) as a cofactor.

The enzyme catalyses (2R)-2,3-dihydroxy-3-methylbutanoate + NADP(+) = (2S)-2-acetolactate + NADPH + H(+). It catalyses the reaction (2R,3R)-2,3-dihydroxy-3-methylpentanoate + NADP(+) = (S)-2-ethyl-2-hydroxy-3-oxobutanoate + NADPH + H(+). The protein operates within amino-acid biosynthesis; L-isoleucine biosynthesis; L-isoleucine from 2-oxobutanoate: step 2/4. It participates in amino-acid biosynthesis; L-valine biosynthesis; L-valine from pyruvate: step 2/4. Involved in the biosynthesis of branched-chain amino acids (BCAA). Catalyzes an alkyl-migration followed by a ketol-acid reduction of (S)-2-acetolactate (S2AL) to yield (R)-2,3-dihydroxy-isovalerate. In the isomerase reaction, S2AL is rearranged via a Mg-dependent methyl migration to produce 3-hydroxy-3-methyl-2-ketobutyrate (HMKB). In the reductase reaction, this 2-ketoacid undergoes a metal-dependent reduction by NADPH to yield (R)-2,3-dihydroxy-isovalerate. The sequence is that of Ketol-acid reductoisomerase (NADP(+)) from Chlorobium phaeobacteroides (strain BS1).